The sequence spans 135 residues: ATP synthase epsilon chain (135 aa).

This sequence belongs to the ATPase epsilon chain family. As to quaternary structure, F-type ATPases have 2 components, CF(1) - the catalytic core - and CF(0) - the membrane proton channel. CF(1) has five subunits: alpha(3), beta(3), gamma(1), delta(1), epsilon(1). CF(0) has three main subunits: a, b and c.

It localises to the cellular thylakoid membrane. Its function is as follows. Produces ATP from ADP in the presence of a proton gradient across the membrane. In Prochlorococcus marinus (strain MIT 9211), this protein is ATP synthase epsilon chain.